We begin with the raw amino-acid sequence, 349 residues long: Methionine import ATP-binding protein MetN (349 aa).

The ABC transporter domain occupies 5–245; the sequence is IDLKNITVQF…PQKQLTRQFV (241 aa). 37-44 is an ATP binding site; the sequence is GFSGAGKS.

Belongs to the ABC transporter superfamily. Methionine importer (TC 3.A.1.24) family. In terms of assembly, the complex is composed of two ATP-binding proteins (MetN), two transmembrane proteins (MetI) and a solute-binding protein (MetQ).

It is found in the cell membrane. It catalyses the reaction L-methionine(out) + ATP + H2O = L-methionine(in) + ADP + phosphate + H(+). The catalysed reaction is D-methionine(out) + ATP + H2O = D-methionine(in) + ADP + phosphate + H(+). Its function is as follows. Part of the ABC transporter complex MetNIQ involved in methionine import. Responsible for energy coupling to the transport system. The protein is Methionine import ATP-binding protein MetN of Lactobacillus johnsonii (strain CNCM I-12250 / La1 / NCC 533).